Consider the following 154-residue polypeptide: Myoglobin (154 aa).

Residues 2–148 form the Globin domain; it reads VLSEGEWQLV…FRKDIAAKYK (147 aa). Ser-4 bears the Phosphoserine mark. His-65 contacts nitrite. Position 65 (His-65) interacts with O2. Position 68 is a phosphothreonine (Thr-68). His-94 lines the heme b pocket.

It belongs to the globin family. Monomeric.

It is found in the cytoplasm. It localises to the sarcoplasm. It carries out the reaction Fe(III)-heme b-[protein] + nitric oxide + H2O = Fe(II)-heme b-[protein] + nitrite + 2 H(+). The catalysed reaction is H2O2 + AH2 = A + 2 H2O. In terms of biological role, monomeric heme protein which primary function is to store oxygen and facilitate its diffusion within muscle tissues. Reversibly binds oxygen through a pentacoordinated heme iron and enables its timely and efficient release as needed during periods of heightened demand. Depending on the oxidative conditions of tissues and cells, and in addition to its ability to bind oxygen, it also has a nitrite reductase activity whereby it regulates the production of bioactive nitric oxide. Under stress conditions, like hypoxia and anoxia, it also protects cells against reactive oxygen species thanks to its pseudoperoxidase activity. The chain is Myoglobin (MB) from Kogia breviceps (Pygmy sperm whale).